A 200-amino-acid chain; its full sequence is Dephospho-CoA kinase (200 aa).

A DPCK domain is found at 6-200 (AIALSGGIAT…KIKAKYLEKK (195 aa)). Position 14-19 (14-19 (ATGKST)) interacts with ATP.

The protein belongs to the CoaE family.

The protein resides in the cytoplasm. It catalyses the reaction 3'-dephospho-CoA + ATP = ADP + CoA + H(+). It functions in the pathway cofactor biosynthesis; coenzyme A biosynthesis; CoA from (R)-pantothenate: step 5/5. Its function is as follows. Catalyzes the phosphorylation of the 3'-hydroxyl group of dephosphocoenzyme A to form coenzyme A. The sequence is that of Dephospho-CoA kinase from Sulfurimonas denitrificans (strain ATCC 33889 / DSM 1251) (Thiomicrospira denitrificans (strain ATCC 33889 / DSM 1251)).